Reading from the N-terminus, the 767-residue chain is Protein hunchback (767 aa).

3 disordered regions span residues 30–51 (EPGH…PIPS), 105–127 (QQQY…HLMG), and 174–212 (EKLQ…SNSS). Over residues 39 to 51 (SVASSPRQSPIPS) the composition is skewed to polar residues. A compositionally biased stretch (low complexity) spans 105-117 (QQQYQQHFQAAQQ). Residues 200–212 (EPEKEHDQMSNSS) are compositionally biased toward basic and acidic residues. C2H2-type zinc fingers lie at residues 242 to 264 (YKCK…TRTH), 271 to 293 (LQCP…IRKH), 299 to 321 (FQCD…RKSH), and 327 to 351 (YRCA…KYGH). Disordered stretches follow at residues 357-424 (LDED…TSQL), 518-570 (QLQQ…QPQQ), and 610-704 (GVMT…APPS). The segment covering 386–397 (IASGGSGSGSGS) has biased composition (gly residues). Over residues 518–527 (QLQQQNQQQS) the composition is skewed to low complexity. Over residues 528-537 (DNEEEEQDDE) the composition is skewed to acidic residues. Positions 661–704 (ANTSASSTASSSGNSSNASSNSNGNSSSNSSSSGTNSAAAAPPS) are enriched in low complexity. 2 consecutive C2H2-type zinc fingers follow at residues 714-736 (YECK…MGYH) and 742-766 (FKCN…RNAH).

Belongs to the hunchback C2H2-type zinc-finger protein family.

The protein localises to the nucleus. Gap class segmentation protein that controls development of head structures. The protein is Protein hunchback (hb) of Drosophila orena (Fruit fly).